We begin with the raw amino-acid sequence, 212 residues long: Peptide methionine sulfoxide reductase MsrA (212 aa).

Residue Cys-52 is part of the active site.

Belongs to the MsrA Met sulfoxide reductase family.

It carries out the reaction L-methionyl-[protein] + [thioredoxin]-disulfide + H2O = L-methionyl-(S)-S-oxide-[protein] + [thioredoxin]-dithiol. The enzyme catalyses [thioredoxin]-disulfide + L-methionine + H2O = L-methionine (S)-S-oxide + [thioredoxin]-dithiol. In terms of biological role, has an important function as a repair enzyme for proteins that have been inactivated by oxidation. Catalyzes the reversible oxidation-reduction of methionine sulfoxide in proteins to methionine. The chain is Peptide methionine sulfoxide reductase MsrA from Escherichia coli (strain ATCC 8739 / DSM 1576 / NBRC 3972 / NCIMB 8545 / WDCM 00012 / Crooks).